The chain runs to 454 residues: uncharacterized protein (454 aa).

The 45-residue stretch at 1–45 (MAAEGKAIAKVNDLVIFVPYVVPGDVVDLQIKRKKNKYAEAEAVK) folds into the TRAM domain. [4Fe-4S] cluster-binding residues include Cys58, Cys64, Cys67, and Cys160. The S-adenosyl-L-methionine site is built by Gln286, Tyr315, Glu336, and Asp385. The active-site Nucleophile is Cys412.

This sequence belongs to the class I-like SAM-binding methyltransferase superfamily. RNA M5U methyltransferase family.

This is an uncharacterized protein from Bacteroides thetaiotaomicron (strain ATCC 29148 / DSM 2079 / JCM 5827 / CCUG 10774 / NCTC 10582 / VPI-5482 / E50).